The sequence spans 395 residues: Glutamyl-tRNA reductase (395 aa).

Residues threonine 45–arginine 48, serine 87, glutamate 92–glutamine 94, and glutamine 98 each bind substrate. Catalysis depends on cysteine 46, which acts as the Nucleophile. An NADP(+)-binding site is contributed by glycine 167–glycine 172.

This sequence belongs to the glutamyl-tRNA reductase family. As to quaternary structure, homodimer.

The catalysed reaction is (S)-4-amino-5-oxopentanoate + tRNA(Glu) + NADP(+) = L-glutamyl-tRNA(Glu) + NADPH + H(+). It participates in porphyrin-containing compound metabolism; protoporphyrin-IX biosynthesis; 5-aminolevulinate from L-glutamyl-tRNA(Glu): step 1/2. Functionally, catalyzes the NADPH-dependent reduction of glutamyl-tRNA(Glu) to glutamate 1-semialdehyde (GSA). This chain is Glutamyl-tRNA reductase, found in Methanosphaera stadtmanae (strain ATCC 43021 / DSM 3091 / JCM 11832 / MCB-3).